Consider the following 432-residue polypeptide: Histidine--tRNA ligase (432 aa).

It belongs to the class-II aminoacyl-tRNA synthetase family. Homodimer.

The protein resides in the cytoplasm. The enzyme catalyses tRNA(His) + L-histidine + ATP = L-histidyl-tRNA(His) + AMP + diphosphate + H(+). The polypeptide is Histidine--tRNA ligase (Ralstonia nicotianae (strain ATCC BAA-1114 / GMI1000) (Ralstonia solanacearum)).